A 1176-amino-acid chain; its full sequence is Serine/threonine-protein kinase pakF (1176 aa).

2 stretches are compositionally biased toward low complexity: residues 1-19 (MSNL…ESSS) and 32-52 (NLLN…SGSN). 2 disordered regions span residues 1 to 231 (MSNL…HESR) and 254 to 361 (LPST…KKTK). Residues 64–76 (QLPPNYTPPPPPH) are compositionally biased toward pro residues. Residues 92 to 133 (LNNENSDNNNNNNNNNNNNNNNNNNNNNNNNNNNEQLARTES) adopt a coiled-coil conformation. Low complexity-rich tracts occupy residues 93-125 (NNEN…NNNN), 133-148 (SSVS…SNSG), and 156-172 (SSNI…ETYS). Positions 173–197 (MSPNQTLNSNIDSSEQQHQDLSSSV) are enriched in polar residues. The segment covering 198–226 (NNNNNNNNNNNNNNNNNNNNNNNNNNNNN) has biased composition (low complexity). Residues 254 to 289 (LPSTPTQQNVEIQTTNGGSSETSPNGLISPRPSNDQ) show a composition bias toward polar residues. The span at 316–353 (SLSSSTTTPSTTSSLTSSPSSSSLAISSPNTTAATTTN) shows a compositional bias: low complexity. One can recognise a CRIB domain in the interval 370 to 383 (ISVPYNVIHKMHVD). Residues 394–646 (FILDEKLGDG…PIDLLCHPFL (253 aa)) enclose the Protein kinase domain. ATP contacts are provided by residues 400–408 (LGDGAYGSV) and lysine 423. Aspartate 514 functions as the Proton acceptor in the catalytic mechanism. Disordered regions lie at residues 670 to 723 (IDDL…SDEL), 753 to 885 (QEEE…GNNL), 968 to 1083 (HTTS…TGRA), and 1112 to 1176 (NSNS…NIKK). Composition is skewed to low complexity over residues 682-693 (SQSSSSSSPQSP) and 710-720 (SIISPIPSSPS). 2 stretches are compositionally biased toward acidic residues: residues 767-789 (DEQD…EDVD) and 813-844 (DQDD…DEEI). Positions 812 to 873 (SDQDDEEEDE…NKKKNKKNNL (62 aa)) form a coiled coil. Positions 852-870 (VRKKKNKSTKKSNKKKNKK) are enriched in basic residues. 2 stretches are compositionally biased toward polar residues: residues 873–884 (LSTIGKSGSGNN) and 968–985 (HTTS…ATNL). Low complexity-rich tracts occupy residues 991–1044 (SSSP…RPNS), 1051–1066 (NNSS…SSSS), and 1148–1176 (SSGS…NIKK).

This sequence belongs to the protein kinase superfamily. STE Ser/Thr protein kinase family. STE20 subfamily. The cofactor is Mg(2+).

It carries out the reaction L-seryl-[protein] + ATP = O-phospho-L-seryl-[protein] + ADP + H(+). It catalyses the reaction L-threonyl-[protein] + ATP = O-phospho-L-threonyl-[protein] + ADP + H(+). The sequence is that of Serine/threonine-protein kinase pakF from Dictyostelium discoideum (Social amoeba).